The chain runs to 427 residues: 3-phosphoshikimate 1-carboxyvinyltransferase (427 aa).

3 residues coordinate 3-phosphoshikimate: K20, S21, and R25. A phosphoenolpyruvate-binding site is contributed by K20. Positions 92 and 120 each coordinate phosphoenolpyruvate. 4 residues coordinate 3-phosphoshikimate: S166, Q168, D312, and K339. Q168 contacts phosphoenolpyruvate. Catalysis depends on D312, which acts as the Proton acceptor. Positions 343 and 385 each coordinate phosphoenolpyruvate.

This sequence belongs to the EPSP synthase family. Monomer.

It localises to the cytoplasm. It catalyses the reaction 3-phosphoshikimate + phosphoenolpyruvate = 5-O-(1-carboxyvinyl)-3-phosphoshikimate + phosphate. The protein operates within metabolic intermediate biosynthesis; chorismate biosynthesis; chorismate from D-erythrose 4-phosphate and phosphoenolpyruvate: step 6/7. Functionally, catalyzes the transfer of the enolpyruvyl moiety of phosphoenolpyruvate (PEP) to the 5-hydroxyl of shikimate-3-phosphate (S3P) to produce enolpyruvyl shikimate-3-phosphate and inorganic phosphate. The polypeptide is 3-phosphoshikimate 1-carboxyvinyltransferase (Streptococcus thermophilus (strain CNRZ 1066)).